A 409-amino-acid polypeptide reads, in one-letter code: Arginine biosynthesis bifunctional protein ArgJ (409 aa).

Residues T157, K183, T194, E281, N404, and S409 each coordinate substrate. T194 (nucleophile) is an active-site residue.

Belongs to the ArgJ family. Heterotetramer of two alpha and two beta chains.

The protein resides in the cytoplasm. The catalysed reaction is N(2)-acetyl-L-ornithine + L-glutamate = N-acetyl-L-glutamate + L-ornithine. It catalyses the reaction L-glutamate + acetyl-CoA = N-acetyl-L-glutamate + CoA + H(+). It participates in amino-acid biosynthesis; L-arginine biosynthesis; L-ornithine and N-acetyl-L-glutamate from L-glutamate and N(2)-acetyl-L-ornithine (cyclic): step 1/1. It functions in the pathway amino-acid biosynthesis; L-arginine biosynthesis; N(2)-acetyl-L-ornithine from L-glutamate: step 1/4. Its function is as follows. Catalyzes two activities which are involved in the cyclic version of arginine biosynthesis: the synthesis of N-acetylglutamate from glutamate and acetyl-CoA as the acetyl donor, and of ornithine by transacetylation between N(2)-acetylornithine and glutamate. This is Arginine biosynthesis bifunctional protein ArgJ from Zymomonas mobilis subsp. mobilis (strain ATCC 31821 / ZM4 / CP4).